The primary structure comprises 239 residues: NAD(P)H-hydrate epimerase (239 aa).

The region spanning 14–220 (AAALDQELMS…EMAEQYNLDI (207 aa)) is the YjeF N-terminal domain. Residue 64-68 (NNGGD) coordinates (6S)-NADPHX. Residues Asn-65 and Asp-126 each contribute to the K(+) site. (6S)-NADPHX-binding positions include 130-136 (GFSFSGE) and Asp-159. Ser-162 is a K(+) binding site.

Belongs to the NnrE/AIBP family. K(+) serves as cofactor.

It localises to the cytoplasm. The protein localises to the mitochondrion. The catalysed reaction is (6R)-NADHX = (6S)-NADHX. It carries out the reaction (6R)-NADPHX = (6S)-NADPHX. In terms of biological role, catalyzes the epimerization of the S- and R-forms of NAD(P)HX, a damaged form of NAD(P)H that is a result of enzymatic or heat-dependent hydration. This is a prerequisite for the S-specific NAD(P)H-hydrate dehydratase to allow the repair of both epimers of NAD(P)HX. The protein is NAD(P)H-hydrate epimerase of Phaeosphaeria nodorum (strain SN15 / ATCC MYA-4574 / FGSC 10173) (Glume blotch fungus).